Reading from the N-terminus, the 388-residue chain is Outer membrane protein assembly factor BamB (388 aa).

Positions 1-17 (MVLSLLSVMLLSGYKFL) are cleaved as a signal peptide.

This sequence belongs to the BamB family. As to quaternary structure, part of the Bam complex, which is composed of the outer membrane protein BamA, and four lipoproteins BamB, BamC, BamD and BamE.

It is found in the cell outer membrane. In terms of biological role, part of the outer membrane protein assembly complex, which is involved in assembly and insertion of beta-barrel proteins into the outer membrane. This Moranella endobia (strain PCIT) protein is Outer membrane protein assembly factor BamB.